A 190-amino-acid chain; its full sequence is Potassium-transporting ATPase KdpC subunit (190 aa).

A helical transmembrane segment spans residues 7–27 (PALLMLLVWTLITGVFYPVLV).

Belongs to the KdpC family. In terms of assembly, the system is composed of three essential subunits: KdpA, KdpB and KdpC.

It is found in the cell inner membrane. Its function is as follows. Part of the high-affinity ATP-driven potassium transport (or Kdp) system, which catalyzes the hydrolysis of ATP coupled with the electrogenic transport of potassium into the cytoplasm. This subunit acts as a catalytic chaperone that increases the ATP-binding affinity of the ATP-hydrolyzing subunit KdpB by the formation of a transient KdpB/KdpC/ATP ternary complex. This is Potassium-transporting ATPase KdpC subunit from Methylococcus capsulatus (strain ATCC 33009 / NCIMB 11132 / Bath).